A 404-amino-acid polypeptide reads, in one-letter code: CD209 antigen (404 aa).

Residues M1–C37 are Cytoplasmic-facing. 3 short sequence motifs (endocytosis signal) span residues L14 to L15, E16 to E18, and Y31 to L34. A helical; Signal-anchor for type II membrane protein transmembrane segment spans residues L38–V58. The Extracellular portion of the chain corresponds to Q59–A404. N80 is a glycosylation site (N-linked (GlcNAc...) asparagine). 7 consecutive repeat copies span residues K96 to S118, K119 to S141, K142 to S164, K165 to S187, K188 to S210, K211 to S233, and K234 to P257. Residues K96–P257 are 7 X approximate tandem repeats. Cystine bridges form between C256–C267, C284–C377, and C356–C369. The region spanning F263–K378 is the C-type lectin domain. Residues E347, N349, V351, E354, N365, and D366 each coordinate Ca(2+).

As to quaternary structure, homotetramer. Interacts with C1QBP; the interaction is indicative for a C1q:C1QBP:CD209 signaling complex. Interacts with ICAM2 and ICAM3 by binding to mannose-like carbohydrates. Interacts (via C-type lectin domain) with CEACAM1 (via Lewis X moieties); this interaction is regulated by the glycosylation pattern of CEACAM1 on cell types and regulates contact between dendritic cells and neutrophils. In terms of assembly, (Microbial infection) Interacts with HIV-1 and HIV-2 gp120. (Microbial infection) Interacts with ebolavirus envelope glycoproteins. As to quaternary structure, (Microbial infection) Interacts with cytomegalovirus gB protein. In terms of assembly, (Microbial infection) Interacts with HCV E2 protein. (Microbial infection) Interacts with dengue virus major envelope protein E. As to quaternary structure, (Microbial infection) Interacts with measles hemagglutinin. In terms of assembly, (Microbial infection) Interacts with herpes simplex virus 1 surface proteins. (Microbial infection) Interacts with Influenzavirus A hemagglutinin. As to quaternary structure, (Microbial infection) Interacts with SARS-CoV spike glycoprotein. In terms of assembly, (Microbial infection) Interacts with Japanese encephalitis virus E protein. (Microbial infection) Interacts with Lassa virus Glycoprotein. As to quaternary structure, (Microbial infection) Interacts with marburg virus glycoprotein. In terms of assembly, (Microbial infection) Interacts with Respiratory syncytial virus glycoprotein G. (Microbial infection) Interacts with Rift valley fever virus and uukuniemi virus envelope glycoprotein. As to quaternary structure, (Microbial infection) Interacts with west-nile virus envelope glycoprotein. In terms of assembly, (Microbial infection) Interacts with whole M.bovis cells in a Ca(2+)-dependent and independent manner; in vitro experiments suggest it interacts with CH60.1 (groL1), DnaK, GADPH (gap) and LrpG. Predominantly expressed in dendritic cells and in DC-residing tissues. Also found in placental macrophages, endothelial cells of placental vascular channels, peripheral blood mononuclear cells, and THP-1 monocytes.

Its subcellular location is the cell membrane. The protein resides in the secreted. In terms of biological role, pathogen-recognition receptor expressed on the surface of immature dendritic cells (DCs) and involved in initiation of primary immune response. Thought to mediate the endocytosis of pathogens which are subsequently degraded in lysosomal compartments. The receptor returns to the cell membrane surface and the pathogen-derived antigens are presented to resting T-cells via MHC class II proteins to initiate the adaptive immune response. On DCs it is a high affinity receptor for ICAM2 and ICAM3 by binding to mannose-like carbohydrates. May act as a DC rolling receptor that mediates transendothelial migration of DC presursors from blood to tissues by binding endothelial ICAM2. Seems to regulate DC-induced T-cell proliferation by binding to ICAM3 on T-cells in the immunological synapse formed between DC and T-cells. Functionally, (Microbial infection) Acts as an attachment receptor for HIV-1 and HIV-2. Its function is as follows. (Microbial infection) Acts as an attachment receptor for Ebolavirus. In terms of biological role, (Microbial infection) Acts as an attachment receptor for Cytomegalovirus. (Microbial infection) Acts as an attachment receptor for HCV. Functionally, (Microbial infection) Acts as an attachment receptor for Dengue virus. Its function is as follows. (Microbial infection) Acts as an attachment receptor for Measles virus. In terms of biological role, (Microbial infection) Acts as an attachment receptor for Herpes simplex virus 1. (Microbial infection) Acts as an attachment receptor for Influenzavirus A. Functionally, (Microbial infection) Acts as an attachment receptor for SARS-CoV. Its function is as follows. (Microbial infection) Acts as an attachment receptor for Japanese encephalitis virus. In terms of biological role, (Microbial infection) Acts as an attachment receptor for Lassa virus. Acts as an attachment receptor for Marburg virusn. (Microbial infection) Acts as an attachment receptor for Respiratory syncytial virus. Functionally, (Microbial infection) Acts as an attachment receptor for Rift valley fever virus and uukuniemi virus. Its function is as follows. (Microbial infection) Acts as an attachment receptor for West-nile virus. In terms of biological role, (Microbial infection) Probably recognizes in a calcium-dependent manner high mannose N-linked oligosaccharides in a variety of bacterial pathogen antigens, including Leishmania pifanoi LPG, Lewis-x antigen in Helicobacter pylori LPS, mannose in Klebsiella pneumonae LPS, di-mannose and tri-mannose in Mycobacterium tuberculosis ManLAM and Lewis-x antigen in Schistosoma mansoni SEA. Recognition of M.tuberculosis by dendritic cells occurs partially via this molecule. This is CD209 antigen (CD209) from Homo sapiens (Human).